We begin with the raw amino-acid sequence, 235 residues long: Aspartate/glutamate leucyltransferase (235 aa).

This sequence belongs to the R-transferase family. Bpt subfamily.

It is found in the cytoplasm. It catalyses the reaction N-terminal L-glutamyl-[protein] + L-leucyl-tRNA(Leu) = N-terminal L-leucyl-L-glutamyl-[protein] + tRNA(Leu) + H(+). The catalysed reaction is N-terminal L-aspartyl-[protein] + L-leucyl-tRNA(Leu) = N-terminal L-leucyl-L-aspartyl-[protein] + tRNA(Leu) + H(+). In terms of biological role, functions in the N-end rule pathway of protein degradation where it conjugates Leu from its aminoacyl-tRNA to the N-termini of proteins containing an N-terminal aspartate or glutamate. This Pseudomonas putida (strain W619) protein is Aspartate/glutamate leucyltransferase.